We begin with the raw amino-acid sequence, 336 residues long: Aspartate carbamoyltransferase catalytic subunit (336 aa).

Positions 72 and 73 each coordinate carbamoyl phosphate. Residue K100 participates in L-aspartate binding. Positions 122, 155, and 158 each coordinate carbamoyl phosphate. Positions 188 and 242 each coordinate L-aspartate. Residues G288 and P289 each coordinate carbamoyl phosphate.

This sequence belongs to the aspartate/ornithine carbamoyltransferase superfamily. ATCase family. In terms of assembly, heterododecamer (2C3:3R2) of six catalytic PyrB chains organized as two trimers (C3), and six regulatory PyrI chains organized as three dimers (R2).

It catalyses the reaction carbamoyl phosphate + L-aspartate = N-carbamoyl-L-aspartate + phosphate + H(+). The protein operates within pyrimidine metabolism; UMP biosynthesis via de novo pathway; (S)-dihydroorotate from bicarbonate: step 2/3. Its function is as follows. Catalyzes the condensation of carbamoyl phosphate and aspartate to form carbamoyl aspartate and inorganic phosphate, the committed step in the de novo pyrimidine nucleotide biosynthesis pathway. The polypeptide is Aspartate carbamoyltransferase catalytic subunit (Lactobacillus leichmannii).